The following is a 344-amino-acid chain: Dihydroorotase (344 aa).

Residues His-13 and His-15 each coordinate Zn(2+). Substrate contacts are provided by residues 15–17 (HLR) and Asn-41. Zn(2+) is bound by residues Lys-98, His-135, and His-173. Lys-98 carries the N6-carboxylysine modification. Residue His-135 coordinates substrate. Leu-218 contributes to the substrate binding site. Asp-247 contributes to the Zn(2+) binding site. Asp-247 is an active-site residue. His-251 and Ala-263 together coordinate substrate.

It belongs to the metallo-dependent hydrolases superfamily. DHOase family. Class II DHOase subfamily. Homodimer. Requires Zn(2+) as cofactor.

The enzyme catalyses (S)-dihydroorotate + H2O = N-carbamoyl-L-aspartate + H(+). The protein operates within pyrimidine metabolism; UMP biosynthesis via de novo pathway; (S)-dihydroorotate from bicarbonate: step 3/3. Catalyzes the reversible cyclization of carbamoyl aspartate to dihydroorotate. This Neisseria meningitidis serogroup B (strain ATCC BAA-335 / MC58) protein is Dihydroorotase.